We begin with the raw amino-acid sequence, 407 residues long: Na(+)-translocating NADH-quinone reductase subunit F (407 aa).

The helical transmembrane segment at isoleucine 3–alanine 23 threads the bilayer. Residues glycine 32 to isoleucine 126 form the 2Fe-2S ferredoxin-type domain. The [2Fe-2S] cluster site is built by cysteine 69, cysteine 75, cysteine 78, and cysteine 110. Residues valine 129–lysine 269 enclose the FAD-binding FR-type domain.

This sequence belongs to the NqrF family. In terms of assembly, composed of six subunits; NqrA, NqrB, NqrC, NqrD, NqrE and NqrF. [2Fe-2S] cluster serves as cofactor. The cofactor is FAD.

Its subcellular location is the cell inner membrane. The enzyme catalyses a ubiquinone + n Na(+)(in) + NADH + H(+) = a ubiquinol + n Na(+)(out) + NAD(+). Its function is as follows. NQR complex catalyzes the reduction of ubiquinone-1 to ubiquinol by two successive reactions, coupled with the transport of Na(+) ions from the cytoplasm to the periplasm. The first step is catalyzed by NqrF, which accepts electrons from NADH and reduces ubiquinone-1 to ubisemiquinone by a one-electron transfer pathway. This is Na(+)-translocating NADH-quinone reductase subunit F from Klebsiella pneumoniae subsp. pneumoniae (strain ATCC 700721 / MGH 78578).